A 105-amino-acid chain; its full sequence is Thioredoxin (105 aa).

Residues 1–105 form the Thioredoxin domain; it reads MANNVTDSSF…SLLDWINKSI (105 aa). Cysteine 30 and cysteine 33 form a disulfide bridge.

It belongs to the thioredoxin family.

Its function is as follows. Component of the thioredoxin-thioredoxin reductase system. Participates in various redox reactions through the reversible oxidation of its active center dithiol to a disulfide and catalyzes dithiol-disulfide exchange reactions. In Rickettsia felis (strain ATCC VR-1525 / URRWXCal2) (Rickettsia azadi), this protein is Thioredoxin (trxA).